We begin with the raw amino-acid sequence, 938 residues long: AP-4 complex subunit epsilon (938 aa).

10 HEAT repeats span residues 118 to 153, 154 to 190, 192 to 227, 234 to 272, 321 to 358, 359 to 395, 397 to 431, 454 to 495, 517 to 556, and 562 to 601; these read DLII…INEE, TIPA…KSPS, VSHL…EDVN, SSFV…IMAL, KLLE…ISPD, IAEQ…SSNV, VIVD…QFAP, KVAH…EPKL, YSAS…FEIA, and DVLP…RAVE. Disordered regions lie at residues 690–712, 725–867, 880–912, and 919–938; these read EPSY…RESS, WGRP…VMGL, VDSL…KEAL, and RQMG…DLLG. A compositionally biased stretch (polar residues) spans 694–706; that stretch reads YSESHQPISTSLV. The span at 728–744 shows a compositional bias: low complexity; that stretch reads PSYQSTTAASSTTPQAA. The span at 764-779 shows a compositional bias: basic and acidic residues; the sequence is SSYEPKKPEIDPEKQR. Residues 808 to 821 are compositionally biased toward polar residues; it reads ANKTATVPKENQTP. Low complexity-rich tracts occupy residues 853 to 863 and 880 to 891; these read DSSSQDGGSSD and VDSLLSELSDSS. The stretch at 874 to 911 is one HEAT 11 repeat; it reads VTTTTSVDSLLSELSDSSKGNSRTYQPQTSKGPNTKEA. Positions 892 to 906 are enriched in polar residues; it reads KGNSRTYQPQTSKGP.

Belongs to the adaptor complexes large subunit family. In terms of assembly, adaptor protein complex 4 (AP-4) is a heterotetramer composed of two large adaptins (epsilon-type subunit and beta-type subunit), a medium adaptin (mu-type subunit) and a small adaptin (sigma-type subunit).

The protein resides in the golgi apparatus. It localises to the trans-Golgi network. The protein localises to the membrane. It is found in the coated pit. Subunit of novel type of clathrin- or non-clathrin-associated protein coat involved in targeting proteins from the trans-Golgi network (TGN) to the endosomal-lysosomal system. The protein is AP-4 complex subunit epsilon of Arabidopsis thaliana (Mouse-ear cress).